The sequence spans 137 residues: Thionin-like protein 1 (137 aa).

A signal peptide spans 1 to 23 (MEDKRVAMLVVMMLVMGNMLIEA).

This sequence belongs to the plant thionin (TC 1.C.44) family. In terms of processing, is disulfide-linked.

Its subcellular location is the secreted. May be involved in plant defense. The protein is Thionin-like protein 1 of Arabidopsis thaliana (Mouse-ear cress).